The chain runs to 261 residues: Imidazole glycerol phosphate synthase subunit HisF (261 aa).

Residues Asp-16 and Asp-135 contribute to the active site.

This sequence belongs to the HisA/HisF family. Heterodimer of HisH and HisF.

It localises to the cytoplasm. It carries out the reaction 5-[(5-phospho-1-deoxy-D-ribulos-1-ylimino)methylamino]-1-(5-phospho-beta-D-ribosyl)imidazole-4-carboxamide + L-glutamine = D-erythro-1-(imidazol-4-yl)glycerol 3-phosphate + 5-amino-1-(5-phospho-beta-D-ribosyl)imidazole-4-carboxamide + L-glutamate + H(+). Its pathway is amino-acid biosynthesis; L-histidine biosynthesis; L-histidine from 5-phospho-alpha-D-ribose 1-diphosphate: step 5/9. IGPS catalyzes the conversion of PRFAR and glutamine to IGP, AICAR and glutamate. The HisF subunit catalyzes the cyclization activity that produces IGP and AICAR from PRFAR using the ammonia provided by the HisH subunit. The sequence is that of Imidazole glycerol phosphate synthase subunit HisF from Mycobacterium sp. (strain JLS).